The following is a 375-amino-acid chain: Arsenite methyltransferase (375 aa).

Position 335 is a phosphoserine (Ser335).

It belongs to the methyltransferase superfamily. Arsenite methyltransferase family.

It is found in the cytoplasm. Its subcellular location is the cytosol. The enzyme catalyses arsenic triglutathione + [thioredoxin]-dithiol + S-adenosyl-L-methionine + 2 H2O = methylarsonous acid + [thioredoxin]-disulfide + 3 glutathione + S-adenosyl-L-homocysteine + H(+). The catalysed reaction is arsenic triglutathione + 2 [thioredoxin]-dithiol + 2 S-adenosyl-L-methionine + H2O = dimethylarsinous acid + 2 [thioredoxin]-disulfide + 3 glutathione + 2 S-adenosyl-L-homocysteine + 2 H(+). It carries out the reaction arsenic triglutathione + 3 [thioredoxin]-dithiol + 3 S-adenosyl-L-methionine = trimethylarsine + 3 [thioredoxin]-disulfide + 3 glutathione + 3 S-adenosyl-L-homocysteine + 3 H(+). In terms of biological role, catalyzes the transfer of a methyl group from AdoMet to trivalent arsenicals producing methylated and dimethylated arsenicals. It methylates arsenite to form methylarsonate, Me-AsO(3)H(2), which is reduced by methylarsonate reductase to methylarsonite, Me-As(OH)2. Methylarsonite is also a substrate and it is converted into the much less toxic compound dimethylarsinate (cacodylate), Me(2)As(O)-OH. This chain is Arsenite methyltransferase (AS3MT), found in Homo sapiens (Human).